The primary structure comprises 298 residues: 4-diphosphocytidyl-2-C-methyl-D-erythritol kinase (298 aa).

The active site involves K11. Residue 94 to 104 (PMGGGLGGGSS) participates in ATP binding. D136 is a catalytic residue.

It belongs to the GHMP kinase family. IspE subfamily.

It catalyses the reaction 4-CDP-2-C-methyl-D-erythritol + ATP = 4-CDP-2-C-methyl-D-erythritol 2-phosphate + ADP + H(+). Its pathway is isoprenoid biosynthesis; isopentenyl diphosphate biosynthesis via DXP pathway; isopentenyl diphosphate from 1-deoxy-D-xylulose 5-phosphate: step 3/6. Its function is as follows. Catalyzes the phosphorylation of the position 2 hydroxy group of 4-diphosphocytidyl-2C-methyl-D-erythritol. This Chromohalobacter salexigens (strain ATCC BAA-138 / DSM 3043 / CIP 106854 / NCIMB 13768 / 1H11) protein is 4-diphosphocytidyl-2-C-methyl-D-erythritol kinase.